The sequence spans 292 residues: ATP phosphoribosyltransferase (292 aa).

This sequence belongs to the ATP phosphoribosyltransferase family. Long subfamily. It depends on Mg(2+) as a cofactor.

It localises to the cytoplasm. The catalysed reaction is 1-(5-phospho-beta-D-ribosyl)-ATP + diphosphate = 5-phospho-alpha-D-ribose 1-diphosphate + ATP. Its pathway is amino-acid biosynthesis; L-histidine biosynthesis; L-histidine from 5-phospho-alpha-D-ribose 1-diphosphate: step 1/9. Its activity is regulated as follows. Feedback inhibited by histidine. In terms of biological role, catalyzes the condensation of ATP and 5-phosphoribose 1-diphosphate to form N'-(5'-phosphoribosyl)-ATP (PR-ATP). Has a crucial role in the pathway because the rate of histidine biosynthesis seems to be controlled primarily by regulation of HisG enzymatic activity. The chain is ATP phosphoribosyltransferase from Desulfatibacillum aliphaticivorans.